We begin with the raw amino-acid sequence, 501 residues long: Glycerol kinase (501 aa).

T14 contacts ADP. 3 residues coordinate ATP: T14, T15, and S16. Residue T14 coordinates sn-glycerol 3-phosphate. Residue R18 participates in ADP binding. 4 residues coordinate sn-glycerol 3-phosphate: R84, E85, Y135, and D244. 5 residues coordinate glycerol: R84, E85, Y135, D244, and Q245. ADP-binding residues include T266 and G309. 4 residues coordinate ATP: T266, G309, Q313, and G410. Positions 410 and 414 each coordinate ADP.

Belongs to the FGGY kinase family.

The catalysed reaction is glycerol + ATP = sn-glycerol 3-phosphate + ADP + H(+). Its pathway is polyol metabolism; glycerol degradation via glycerol kinase pathway; sn-glycerol 3-phosphate from glycerol: step 1/1. With respect to regulation, inhibited by fructose 1,6-bisphosphate (FBP). In terms of biological role, key enzyme in the regulation of glycerol uptake and metabolism. Catalyzes the phosphorylation of glycerol to yield sn-glycerol 3-phosphate. The sequence is that of Glycerol kinase from Deinococcus radiodurans (strain ATCC 13939 / DSM 20539 / JCM 16871 / CCUG 27074 / LMG 4051 / NBRC 15346 / NCIMB 9279 / VKM B-1422 / R1).